The sequence spans 314 residues: Signal peptidase I (314 aa).

A helical transmembrane segment spans residues 5–25; sequence LTIFLLISTLVTGIFWSFYCI. The Cytoplasmic segment spans residues 26–63; sequence KSFKNYLINKKIINNNNFHQEKIEKSKNKTYFLKSLAS. A helical transmembrane segment spans residues 64–84; the sequence is FFPIFLAIFIIRSFIYEPFQI. Topologically, residues 85–314 are extracellular; that stretch reads PSGSMMPTLL…IRINRIGSIH (230 aa). Residues serine 88 and lysine 143 contribute to the active site.

This sequence belongs to the peptidase S26 family.

It is found in the cell membrane. The catalysed reaction is Cleavage of hydrophobic, N-terminal signal or leader sequences from secreted and periplasmic proteins.. In Buchnera aphidicola subsp. Acyrthosiphon pisum (strain APS) (Acyrthosiphon pisum symbiotic bacterium), this protein is Signal peptidase I (lepB).